The chain runs to 103 residues: CLAVATA3/ESR (CLE)-related protein 16 (103 aa).

The signal sequence occupies residues 1 to 21 (MEACSRKRRRRRAYTTSTTGY). The tract at residues 71 to 103 (VSFTGQRREEENRDEVYKDDKRLVHTGPNPLHN) is disordered. The span at 76 to 93 (QRREEENRDEVYKDDKRL) shows a compositional bias: basic and acidic residues. The residue at position 98 (Pro98) is a Hydroxyproline. O-linked (Ara...) hydroxyproline glycosylation is present at Pro98.

This sequence belongs to the CLV3/ESR signal peptide family. The O-glycosylation (arabinosylation) of the hydroxyproline Pro-98 enhances binding affinity of the CLE16p peptide for its receptor. Expressed in roots, stems, apex, seedlings, leaves, flowers and siliques.

It localises to the secreted. The protein resides in the extracellular space. Its function is as follows. Extracellular signal peptide that regulates cell fate. Represses root apical meristem maintenance. Regulates the transition of protophloem cells from proliferation to differentiation, thus impinging on postembryonic growth capacity of the root meristem; this signaling pathway requires CRN and CLV2. The chain is CLAVATA3/ESR (CLE)-related protein 16 from Arabidopsis thaliana (Mouse-ear cress).